The following is a 61-amino-acid chain: uncharacterized protein (61 aa).

A disordered region spans residues 38–61; sequence TPRPFTPGLADPRRLGPRRVQAAQ.

This is an uncharacterized protein from Homo sapiens (Human).